Consider the following 281-residue polypeptide: Urease accessory protein UreD (281 aa).

A disordered region spans residues 1–25 (MLNTLEPQPCETDALSPRLQRSTGS).

Belongs to the UreD family. UreD, UreF and UreG form a complex that acts as a GTP-hydrolysis-dependent molecular chaperone, activating the urease apoprotein by helping to assemble the nickel containing metallocenter of UreC. The UreE protein probably delivers the nickel.

Its subcellular location is the cytoplasm. In terms of biological role, required for maturation of urease via the functional incorporation of the urease nickel metallocenter. This Dinoroseobacter shibae (strain DSM 16493 / NCIMB 14021 / DFL 12) protein is Urease accessory protein UreD.